Reading from the N-terminus, the 291-residue chain is MASGGQFPPQKQESQPGKEHLMDPSPQHASPHYKPANKLQGKVALVTGGDSGIGRSVCYHFALEGATVAFTFVKGHEDKDANETLELLRKAKSSDAKDPIAIAADLGFDDNCKKVVDQVVNAFGSIDVLVNNAAEQYKASTVEDIDEERLERVFRTNIFAYFFMARHALKHMREGSTIINTTSINAYKGNAKLLDYTATKGAIVAFTRGLSLQLISKGIRVNGVAPGPVWTPLIPSSFDEEEVKQFGSEVPMKRAGQPYEIATAYVFLASCDSSYYSGQVLHPNGGAIVNG.

The tract at residues 1 to 35 (MASGGQFPPQKQESQPGKEHLMDPSPQHASPHYKP) is disordered. 45–69 (LVTGGDSGIGRSVCYHFALEGATVA) contributes to the NAD(+) binding site. Serine 183 serves as a coordination point for substrate. Tyrosine 196 serves as the catalytic Proton acceptor.

The protein belongs to the short-chain dehydrogenases/reductases (SDR) family. As to expression, expressed in embryogenic cells, somatic embryos and seeds in the later stages of development, but not in non-embryogenic cells and mature leaves.

Functionally, may act as a short alcohol-polyol-sugar dehydrogenase possibly related to carbohydrate metabolism and the acquisition of desiccation tolerance. May also be involved in signal transduction. This Daucus carota (Wild carrot) protein is Glucose and ribitol dehydrogenase (CAISE5).